Here is a 676-residue protein sequence, read N- to C-terminus: Mediator of RNA polymerase II transcription subunit 17 (676 aa).

2 disordered regions span residues 27–68 (IGSK…QFSN) and 117–176 (IEND…TQDT). Positions 29 to 40 (SKSTSPHSNSTS) are enriched in low complexity. Basic and acidic residues-rich tracts occupy residues 47 to 56 (HNTENEEVDN) and 120 to 134 (DNGKQESKDDTKAED). Residues 135-145 (GIDTMDIDQND) are compositionally biased toward acidic residues. Residues 146–160 (NSEANTNDIGYNEWS) show a composition bias toward polar residues.

The protein belongs to the Mediator complex subunit 17 family. As to quaternary structure, component of the Mediator complex.

It localises to the nucleus. Component of the Mediator complex, a coactivator involved in the regulated transcription of nearly all RNA polymerase II-dependent genes. Mediator functions as a bridge to convey information from gene-specific regulatory proteins to the basal RNA polymerase II transcription machinery. Mediator is recruited to promoters by direct interactions with regulatory proteins and serves as a scaffold for the assembly of a functional preinitiation complex with RNA polymerase II and the general transcription factors. This is Mediator of RNA polymerase II transcription subunit 17 (SRB4) from Candida glabrata (strain ATCC 2001 / BCRC 20586 / JCM 3761 / NBRC 0622 / NRRL Y-65 / CBS 138) (Yeast).